The following is a 170-amino-acid chain: Universal stress protein MJ0531 (170 aa).

This sequence belongs to the universal stress protein A family.

The protein is Universal stress protein MJ0531 of Methanocaldococcus jannaschii (strain ATCC 43067 / DSM 2661 / JAL-1 / JCM 10045 / NBRC 100440) (Methanococcus jannaschii).